A 274-amino-acid polypeptide reads, in one-letter code: Protein LIKE COV 3 (274 aa).

Residues 1 to 60 are Cytoplasmic-facing; that stretch reads METRERDLERLIPMHKSGASPRDVVLSVPPSPLASPIHVAGKEAIYKVIRSWASKKFMTG. The helical transmembrane segment at 61–81 threads the bilayer; the sequence is CVILLPIAVTFYFTWWFIHFV. Topologically, residues 82–93 are extracellular; it reads DGFFSPIYTHLG. The helical transmembrane segment at 94–114 threads the bilayer; that stretch reads INMFGLGFVTSITFIFMVGVF. Over 115–274 the chain is Cytoplasmic; the sequence is MSSWLGASVL…VCLSLVLAWT (160 aa).

Belongs to the plant COV1 protein family.

The protein localises to the membrane. The sequence is that of Protein LIKE COV 3 from Arabidopsis thaliana (Mouse-ear cress).